Reading from the N-terminus, the 41-residue chain is Photosystem II reaction center protein X (41 aa).

Residues 2–6 (TITPS) lie on the Lumenal side of the membrane. A helical transmembrane segment spans residues 7–29 (LKGFFIGLLSGAVVLGLTFAVLI). Residues 30-41 (AISQIDKVQRSL) are Cytoplasmic-facing.

It belongs to the PsbX family. Type 1 subfamily. In terms of assembly, PSII is composed of 1 copy each of membrane proteins PsbA, PsbB, PsbC, PsbD, PsbE, PsbF, PsbH, PsbI, PsbJ, PsbK, PsbL, PsbM, PsbT, PsbX, PsbY, PsbZ, Psb30/Ycf12, peripheral proteins PsbO, CyanoQ (PsbQ), PsbU, PsbV and a large number of cofactors. It forms dimeric complexes. Part of a photosystem II (PSII) assembly intermediate complex PSII-I; crystallized from a strain deleted of psbJ, it forms monomeric PSII before addition of the oxygen evolving complex. PSII-I includes 3 assembly factors not found in mature PSII (Psb27, Psb28 and Psb34). PSII binds multiple chlorophylls, carotenoids and specific lipids. is required as a cofactor.

The protein localises to the cellular thylakoid membrane. In terms of biological role, involved in the binding and/or turnover of quinones at the Q(B) site of photosystem II (PSII). PSII is a light-driven water plastoquinone oxidoreductase, using light energy to abstract electrons from H(2)O, generating a proton gradient subsequently used for ATP formation. The chain is Photosystem II reaction center protein X from Thermosynechococcus vestitus (strain NIES-2133 / IAM M-273 / BP-1).